Here is a 305-residue protein sequence, read N- to C-terminus: Protoheme IX farnesyltransferase 2 (305 aa).

The next 7 membrane-spanning stretches (helical) occupy residues 38 to 58 (LITT…SFLG), 60 to 80 (LNTV…SCAV), 115 to 135 (ILLI…AAVI), 157 to 177 (INTV…WTAV), 181 to 201 (IGVV…PHFL), 236 to 256 (VACL…IVIL), and 285 to 305 (FVYS…FTLF).

This sequence belongs to the UbiA prenyltransferase family. Protoheme IX farnesyltransferase subfamily. Interacts with CtaA.

Its subcellular location is the cell membrane. It catalyses the reaction heme b + (2E,6E)-farnesyl diphosphate + H2O = Fe(II)-heme o + diphosphate. The protein operates within porphyrin-containing compound metabolism; heme O biosynthesis; heme O from protoheme: step 1/1. In terms of biological role, converts heme B (protoheme IX) to heme O by substitution of the vinyl group on carbon 2 of heme B porphyrin ring with a hydroxyethyl farnesyl side group. This is Protoheme IX farnesyltransferase 2 from Bacillus velezensis (strain DSM 23117 / BGSC 10A6 / LMG 26770 / FZB42) (Bacillus amyloliquefaciens subsp. plantarum).